Consider the following 461-residue polypeptide: Photosystem II CP43 reaction center protein (461 aa).

A run of 5 helical transmembrane segments spans residues 57–81 (LFEVAHFVPEKPMYEQGIILLSHLA), 122–143 (LRGPESLEEYSTFFSQDWKDKN), 166–188 (KAMFFGGVYDTWAPGGGDVRIIS), 243–263 (KPFGWVRRAFIWNGEAYLSYS), and 279–300 (WYNNTVYPSEFFGPTAAEASQS). Glu-355 is a [CaMn4O5] cluster binding site. The helical transmembrane segment at 435-459 (RARAAAAGFEKGIDRATEPVLAMRD) threads the bilayer.

Belongs to the PsbB/PsbC family. PsbC subfamily. In terms of assembly, PSII is composed of 1 copy each of membrane proteins PsbA, PsbB, PsbC, PsbD, PsbE, PsbF, PsbH, PsbI, PsbJ, PsbK, PsbL, PsbM, PsbT, PsbX, PsbY, PsbZ, Psb30/Ycf12, peripheral proteins PsbO, CyanoQ (PsbQ), PsbU, PsbV and a large number of cofactors. It forms dimeric complexes. Binds multiple chlorophylls and provides some of the ligands for the Ca-4Mn-5O cluster of the oxygen-evolving complex. It may also provide a ligand for a Cl- that is required for oxygen evolution. PSII binds additional chlorophylls, carotenoids and specific lipids. is required as a cofactor.

Its subcellular location is the cellular thylakoid membrane. Functionally, one of the components of the core complex of photosystem II (PSII). It binds chlorophyll and helps catalyze the primary light-induced photochemical processes of PSII. PSII is a light-driven water:plastoquinone oxidoreductase, using light energy to abstract electrons from H(2)O, generating O(2) and a proton gradient subsequently used for ATP formation. The sequence is that of Photosystem II CP43 reaction center protein from Synechococcus elongatus (strain ATCC 33912 / PCC 7942 / FACHB-805) (Anacystis nidulans R2).